A 767-amino-acid chain; its full sequence is Protein transport protein Sec23A (767 aa).

The Zn(2+) site is built by cysteine 61, cysteine 66, cysteine 85, and cysteine 88. Residues 634 to 720 (PEPVLLDSSS…EHGGSQARFL (87 aa)) form a Gelsolin-like repeat.

It belongs to the SEC23/SEC24 family. SEC23 subfamily. In terms of assembly, COPII is composed of at least five proteins: the Sec23/24 complex, the Sec13/31 complex and Sar1.

It localises to the cytoplasmic vesicle. It is found in the COPII-coated vesicle membrane. The protein localises to the endoplasmic reticulum membrane. Its subcellular location is the cytoplasm. The protein resides in the cytosol. In terms of biological role, component of the coat protein complex II (COPII) which promotes the formation of transport vesicles from the endoplasmic reticulum (ER). The coat has two main functions, the physical deformation of the endoplasmic reticulum membrane into vesicles and the selection of cargo molecules for their transport to the Golgi complex. The chain is Protein transport protein Sec23A from Gallus gallus (Chicken).